Reading from the N-terminus, the 394-residue chain is Histidinol dehydrogenase (394 aa).

Tyrosine 113, glutamine 172, and asparagine 195 together coordinate NAD(+). 3 residues coordinate substrate: threonine 218, glutamine 240, and histidine 243. Positions 240 and 243 each coordinate Zn(2+). Catalysis depends on proton acceptor residues glutamate 294 and histidine 295. Substrate contacts are provided by histidine 295, aspartate 327, glutamate 380, and histidine 385. Position 327 (aspartate 327) interacts with Zn(2+). Histidine 385 lines the Zn(2+) pocket.

Belongs to the histidinol dehydrogenase family. Requires Zn(2+) as cofactor.

The catalysed reaction is L-histidinol + 2 NAD(+) + H2O = L-histidine + 2 NADH + 3 H(+). It participates in amino-acid biosynthesis; L-histidine biosynthesis; L-histidine from 5-phospho-alpha-D-ribose 1-diphosphate: step 9/9. Its function is as follows. Catalyzes the sequential NAD-dependent oxidations of L-histidinol to L-histidinaldehyde and then to L-histidine. The chain is Histidinol dehydrogenase from Sulfurisphaera tokodaii (strain DSM 16993 / JCM 10545 / NBRC 100140 / 7) (Sulfolobus tokodaii).